The following is a 477-amino-acid chain: 3-isopropylmalate dehydratase large subunit (477 aa).

Positions 352, 413, and 416 each coordinate [4Fe-4S] cluster.

The protein belongs to the aconitase/IPM isomerase family. LeuC type 1 subfamily. As to quaternary structure, heterodimer of LeuC and LeuD. [4Fe-4S] cluster serves as cofactor.

It catalyses the reaction (2R,3S)-3-isopropylmalate = (2S)-2-isopropylmalate. Its pathway is amino-acid biosynthesis; L-leucine biosynthesis; L-leucine from 3-methyl-2-oxobutanoate: step 2/4. In terms of biological role, catalyzes the isomerization between 2-isopropylmalate and 3-isopropylmalate, via the formation of 2-isopropylmaleate. The chain is 3-isopropylmalate dehydratase large subunit from Pseudomonas putida (strain GB-1).